Here is a 1871-residue protein sequence, read N- to C-terminus: MPSVCLLLLLFLAVGGALGNRPFRAFVVTDTTLTHLAVHRVTGEVFVGAVNRVFKLAPNLTELRAHVTGPVEDNARCYPPPSMRVCAHRLAPVDNINKLLLIDYAARRLVACGSIWQGICQFLRLDDLFKLGEPHHRKEHYLSGAQEPDSMAGVIVEQGQGPSKLFVGTAVDGKSEYFPTLSSRKLISDEDSADMFSLVYQDEFVSSQIKIPSDTLSLYPAFDIYYIYGFVSASFVYFLTLQLDTQQTLLDTAGEKFFTSKIVRMCAGDSEFYSYVEFPIGCSWRGVEYRLVQSAHLAKPGLLLAQALGVPADEDVLFTIFSQGQKNRASPPRQTILCLFTLSNINAHIRRRIQSCYRGEGTLALPWLLNKELPCINTPMQINGNFCGLVLNQPLGGLHVIEGLPLLADSTDGMASVAAYTYRQHSVVFIGTRSGSLKKVRVDGFQDAHLYETVPVVDGSPILRDLLFSPDHRHIYLLSEKQVSQLPVETCEQYQSCAACLGSGDPHCGWCVLRHRCCREGACLGASAPHGFAEELSKCVQVRVRPNNVSVTSPGVQLTVTLHNVPDLSAGVSCAFEAAAENEAVLLPSGELLCPSPSLQELRALTRGHGATRTVRLQLLSKETGVRFAGADFVFYNCSVLQSCMSCVGSPYPCHWCKYRHTCTSRPHECSFQEGRVHSPEGCPEILPSGDLLIPVGVMQPLTLRAKNLPQPQSGQKNYECVVRVQGRQQRVPAVRFNSSSVQCQNASYSYEGDEHGDTELDFSVVWDGDFPIDKPPSFRALLYKCWAQRPSCGLCLKADPRFNCGWCISEHRCQLRTHCPAPKTNWMHLSQKGTRCSHPRITQIHPLVGPKEGGTRVTIVGENLGLLSREVGLRVAGVRCNSIPAEYISAERIVCEMEESLVPSPPPGPVELCVGDCSADFRTQSEQVYSFVTPTFDQVSPSRGPASGGTRLTISGSSLDAGSRVTVTVRDSECQFVRRDAKAIVCISPLSTLGPSQAPITLAIDRANISSPGLIYTYTQDPTVTRLEPTWSIINGSTAITVSGTHLLTVQEPRVRAKYRGIETTNTCQVINDTAMLCKAPGIFLGRPQPRAQGEHPDEFGFLLDHVQTARSLNRSSFTYYPDPSFEPLGPSGVLDVKPGSHVVLKGKNLIPAAAGSSRLNYTVLIGGQPCSLTVSDTQLLCDSPSQTGRQPVMVLVGGLEFWLGTLHISAERALTLPAMMGLAAGGGLLLLAITAVLVAYKRKTQDADRTLKRLQLQMDNLESRVALECKEAFAELQTDINELTNHMDEVQIPFLDYRTYAVRVLFPGIEAHPVLKELDTPPNVEKALRLFGQLLHSRAFVLTFIHTLEAQSSFSMRDRGTVASLTMVALQSRLDYATGLLKQLLADLIEKNLESKNHPKLLLRRTESVAEKMLTNWFTFLLHKFLKECAGEPLFLLYCAIKQQMEKGPIDAITGEARYSLSEDKLIRQQIDYKTLTLHCVCPENEGSAQVPVKVLNCDSITQAKDKLLDTVYKGIPYSQRPKAEDMDLEWRQGRMTRIILQDEDVTTKIECDWKRLNSLAHYQVTDGSLVALVPKQVSAYNMANSFTFTRSLSRYESLLRTASSPDSLRSRAPMITPDQETGTKLWHLVKNHDHADHREGDRGSKMVSEIYLTRLLATKGTLQKFVDDLFETVFSTAHRGSALPLAIKYMFDFLDEQADQRQISDPDVRHTWKSNCLPLRFWVNVIKNPQFVFDIHKNSITDACLSVVAQTFMDSCSTSEHRLGKDSPSNKLLYAKDIPNYKSWVERYYRDIAKMASISDQDMDAYLVEQSRLHASDFSVLSALNELYFYVTKYRQEILTALDRDASCRKHKLRQKLEQIISLVSSDS.

Residues 1 to 19 (MPSVCLLLLLFLAVGGALG) form the signal peptide. The Sema domain maps to 20–488 (NRPFRAFVVT…SEKQVSQLPV (469 aa)). The Extracellular segment spans residues 20-1220 (NRPFRAFVVT…SAERALTLPA (1201 aa)). N-linked (GlcNAc...) asparagine glycosylation is present at Asn59. 9 cysteine pairs are disulfide-bonded: Cys77-Cys86, Cys112-Cys120, Cys266-Cys387, Cys282-Cys338, Cys356-Cys375, Cys491-Cys508, Cys497-Cys539, Cys500-Cys517, and Cys511-Cys523. Asn548 is a glycosylation site (N-linked (GlcNAc...) asparagine). Cys574 and Cys594 are oxidised to a cystine. N-linked (GlcNAc...) asparagine glycans are attached at residues Asn637, Asn738, and Asn746. IPT/TIG domains follow at residues 840–933 (PRIT…YSFV), 935–1020 (PTFD…YTYT), 1023–1122 (PTVT…FTYY), and 1125–1211 (PSFE…LHIS). N-linked (GlcNAc...) asparagine glycans are attached at residues Asn1009, Asn1036, Asn1073, Asn1115, and Asn1162. A helical transmembrane segment spans residues 1221–1241 (MMGLAAGGGLLLLAITAVLVA). Residues 1242–1871 (YKRKTQDADR…QIISLVSSDS (630 aa)) are Cytoplasmic-facing. Ser1596 bears the Phosphoserine mark.

Belongs to the plexin family. Interacts with CBFA2T3/MTG16.

It localises to the cell membrane. Functionally, coreceptor for SEMA3A and SEMA3F. Necessary for signaling by class 3 semaphorins and subsequent remodeling of the cytoskeleton. Plays a role in axon guidance in the developing nervous system. Regulates the migration of sympathetic neurons, but not of neural crest precursors. Required for normal dendrite spine morphology in pyramidal neurons. May play a role in regulating semaphorin-mediated programmed cell death in the developing nervous system. Class 3 semaphorins bind to a complex composed of a neuropilin and a plexin. The plexin modulates the affinity of the complex for specific semaphorins, and its cytoplasmic domain is required for the activation of down-stream signaling events in the cytoplasm. The polypeptide is Plexin-A3 (PLXNA3) (Homo sapiens (Human)).